The following is a 461-amino-acid chain: MQKLFRTIPAIDKLMKKPQGIDLIERFGHQAFVQEARILIENAREQIIKQQCLPAFMNEQSSIFSLIEQNLQKKRMVSSKTVFNLTGTVLHTNLGRGLWSENAITAATNAMRNNVALEFDIDEGKRSHRDIYISQLIQQLTGAEAACIVNNNAAAVLLMLATFAQGKEVIVSRGELVEIGGAFRIPDIMAQAGCKLVEVGTTNRTHLRDYRNAINENTAFLMKVHTSNYHIQGFTKSVSEEELVELAKEFDLPVISDLGSGSLTDMAVLGLPAEPMVQQKVAAGVDLVSFSCDKLLGGPQAGIIVGKKALIDGLQSHPLKRVLRCDKVILSALEATLRHYLFPEKLTDEVPTFQLLTQSIETLQNKAERLKAVLNKRLDSRYILQVEPSLAQIGSGSLPTETLASVAVTVFAEKQSDLLELEKRFKALPSPIIGRFAQQKFWLDVRSAAQFEQLLNMLEEA.

K294 is modified (N6-(pyridoxal phosphate)lysine).

This sequence belongs to the SelA family. Requires pyridoxal 5'-phosphate as cofactor.

It localises to the cytoplasm. The catalysed reaction is L-seryl-tRNA(Sec) + selenophosphate + H(+) = L-selenocysteinyl-tRNA(Sec) + phosphate. Its pathway is aminoacyl-tRNA biosynthesis; selenocysteinyl-tRNA(Sec) biosynthesis; selenocysteinyl-tRNA(Sec) from L-seryl-tRNA(Sec) (bacterial route): step 1/1. Converts seryl-tRNA(Sec) to selenocysteinyl-tRNA(Sec) required for selenoprotein biosynthesis. This Actinobacillus pleuropneumoniae serotype 5b (strain L20) protein is L-seryl-tRNA(Sec) selenium transferase.